We begin with the raw amino-acid sequence, 117 residues long: Holo-[acyl-carrier-protein] synthase (117 aa).

Residues Asp-8 and Glu-55 each coordinate Mg(2+).

Belongs to the P-Pant transferase superfamily. AcpS family. The cofactor is Mg(2+).

Its subcellular location is the cytoplasm. It carries out the reaction apo-[ACP] + CoA = holo-[ACP] + adenosine 3',5'-bisphosphate + H(+). Functionally, transfers the 4'-phosphopantetheine moiety from coenzyme A to a Ser of acyl-carrier-protein. This is Holo-[acyl-carrier-protein] synthase from Finegoldia magna (strain ATCC 29328 / DSM 20472 / WAL 2508) (Peptostreptococcus magnus).